Consider the following 255-residue polypeptide: Homeobox-leucine zipper protein ATHB-23 (255 aa).

Residues 68–127 (MGEKKRRLNMEQLKALEKDFELGNKLESDRKLELARALGLQPRQIAIWFQNRRARSKTKQ) constitute a DNA-binding region (homeobox). Residues 128–163 (LEKDYDMLKRQFESLRDENEVLQTQNQKLQAQVMAL) form a leucine-zipper region.

The protein belongs to the HD-ZIP homeobox family. Class I subfamily. In terms of tissue distribution, expressed in young leaves, in the adaxial domain of leaf primordia and the rib meristem. Expressed in the styles of flowers and siliques.

The protein localises to the nucleus. Probable transcription factor. The sequence is that of Homeobox-leucine zipper protein ATHB-23 (ATHB-23) from Arabidopsis thaliana (Mouse-ear cress).